The chain runs to 88 residues: Small ribosomal subunit protein bS16 (88 aa).

It belongs to the bacterial ribosomal protein bS16 family.

The protein is Small ribosomal subunit protein bS16 of Geobacter sulfurreducens (strain ATCC 51573 / DSM 12127 / PCA).